Reading from the N-terminus, the 338-residue chain is Malate dehydrogenase, mitochondrial (338 aa).

The transit peptide at 1-24 directs the protein to the mitochondrion; it reads MLSALARPAGAALRRSFSTSAQNN. NAD(+) is bound by residues 31–37 and Asp-57; that span reads GASGGIG. Ser-33 carries an O-linked (GalNAc...) serine glycan. N6-acetyllysine; alternate is present on residues Lys-78 and Lys-91. Residues Lys-78 and Lys-91 each carry the N6-succinyllysine; alternate modification. Substrate contacts are provided by Arg-104 and Arg-110. NAD(+) contacts are provided by residues Asn-117 and 140-142; that span reads ISN. Asn-142 lines the substrate pocket. Lys-165 carries the N6-acetyllysine modification. Asp-173 functions as the Proton relay in the catalytic mechanism. Residue Arg-176 participates in substrate binding. An N6-acetyllysine; alternate modification is found at Lys-185. N6-succinyllysine; alternate is present on Lys-185. His-200 functions as the Proton acceptor in the catalytic mechanism. The residue at position 203 (Lys-203) is an N6-succinyllysine. N6-acetyllysine; alternate is present on residues Lys-215 and Lys-239. Residues Lys-215 and Lys-239 each carry the N6-succinyllysine; alternate modification. Residue Lys-239 is modified to N6-malonyllysine; alternate. Ser-246 is subject to Phosphoserine. NAD(+) is bound at residue Met-251. Lys-269 carries the N6-succinyllysine modification. Residues Lys-296, Lys-301, Lys-307, Lys-314, and Lys-324 each carry the N6-acetyllysine; alternate modification. 5 positions are modified to N6-succinyllysine; alternate: Lys-296, Lys-301, Lys-307, Lys-314, and Lys-324. N6-malonyllysine; alternate is present on Lys-307. Ser-326 carries the phosphoserine modification. N6-acetyllysine; alternate occurs at positions 328, 329, and 335. N6-succinyllysine; alternate is present on Lys-328. Lys-329 is modified (N6-malonyllysine; alternate). Lys-335 is subject to N6-succinyllysine; alternate.

Belongs to the LDH/MDH superfamily. MDH type 1 family. Homodimer. In terms of processing, acetylation is enhanced after treatment either with trichostin A (TSA) or with nicotinamide (NAM) with the appearance of tri- and tetraacetylations. Glucose also increases acetylation. Ubiquitously expressed. Highly expressed in skeletal muscle and heart. Also expressed in liver, ileum, colon, kidney and adipose tissue, and at very low levels in lung, pancreas, stomach and spleen.

The protein localises to the mitochondrion matrix. The catalysed reaction is (S)-malate + NAD(+) = oxaloacetate + NADH + H(+). Its activity is regulated as follows. Enzyme activity is enhanced by acetylation. The polypeptide is Malate dehydrogenase, mitochondrial (Felis catus (Cat)).